We begin with the raw amino-acid sequence, 270 residues long: MSRLEQRFAQLKTEGRAALVTFITAGDPGYDTSLQVLKGLPAAGADVIELGMPFTDPMADGVAIQLATLRALDAGQTLQKTLQMVSEFRVDDQTTPIVLMGYYNPIHRFGVEAFVAQAKEAGVDGLIIVDLPPEHDAELATPAQASGIDFIRLTTPTTDDARLPRVLERSSGFVYYVSVAGVTGAGSATTEHVTEAIARLRRHTSLPISVGFGIRTPEQAAAIARLADGVVVGSAFVDKIATAESPEKAIDGVLTLCAALAEGVRNARIG.

Active-site proton acceptor residues include Glu-49 and Asp-60.

It belongs to the TrpA family. Tetramer of two alpha and two beta chains.

The catalysed reaction is (1S,2R)-1-C-(indol-3-yl)glycerol 3-phosphate + L-serine = D-glyceraldehyde 3-phosphate + L-tryptophan + H2O. The protein operates within amino-acid biosynthesis; L-tryptophan biosynthesis; L-tryptophan from chorismate: step 5/5. Its function is as follows. The alpha subunit is responsible for the aldol cleavage of indoleglycerol phosphate to indole and glyceraldehyde 3-phosphate. In Pseudomonas savastanoi pv. phaseolicola (strain 1448A / Race 6) (Pseudomonas syringae pv. phaseolicola (strain 1448A / Race 6)), this protein is Tryptophan synthase alpha chain.